Reading from the N-terminus, the 178-residue chain is GTP-dependent dephospho-CoA kinase (178 aa).

The GTP site is built by Asp-55, Val-57, Asp-74, Lys-76, and Glu-127.

Belongs to the GTP-dependent DPCK family.

The catalysed reaction is 3'-dephospho-CoA + GTP = GDP + CoA + H(+). It functions in the pathway cofactor biosynthesis; coenzyme A biosynthesis. In terms of biological role, catalyzes the GTP-dependent phosphorylation of the 3'-hydroxyl group of dephosphocoenzyme A to form coenzyme A (CoA). In Saccharolobus islandicus (strain Y.G.57.14 / Yellowstone #1) (Sulfolobus islandicus), this protein is GTP-dependent dephospho-CoA kinase.